The following is a 156-amino-acid chain: Cytochrome c-type biogenesis protein CcmE 1 (156 aa).

At 1–8 the chain is on the cytoplasmic side; it reads MNATRKQR. Residues 9–29 traverse the membrane as a helical; Signal-anchor for type II membrane protein segment; that stretch reads LCLVIGVLAAAALAVTLIVFA. Topologically, residues 30–156 are periplasmic; sequence LQRNMSYLFT…ATAAPLTTPR (127 aa). 2 residues coordinate heme: histidine 123 and tyrosine 127.

This sequence belongs to the CcmE/CycJ family.

It localises to the cell inner membrane. In terms of biological role, heme chaperone required for the biogenesis of c-type cytochromes. Transiently binds heme delivered by CcmC and transfers the heme to apo-cytochromes in a process facilitated by CcmF and CcmH. This is Cytochrome c-type biogenesis protein CcmE 1 from Xanthomonas oryzae pv. oryzae (strain MAFF 311018).